Reading from the N-terminus, the 499-residue chain is Thioredoxin reductase 1, cytoplasmic (499 aa).

Residues 22 to 23, 42 to 43, 58 to 59, and 63 to 67 each bind FAD; these read SG, DF, TC, and SCIPK. An intrachain disulfide couples C59 to C64. Residue K68 is modified to N6-succinyllysine. Y131 carries the phosphotyrosine modification. Residues 131-132 and T161 contribute to the FAD site; that span reads YG. NADP(+) is bound by residues R166, 198-204, 221-222, R226, 226-228, 292-293, and K315; these read ASYVALE, RS, RGF, and GR. An FAD-binding site is contributed by Y200. FAD contacts are provided by residues D334, 341-343, and H472; that span reads ELT. NADP(+) is bound at residue E341. Catalysis depends on H472, which acts as the Proton acceptor. The segment at residues 497–498 is a cross-link (cysteinyl-selenocysteine (Cys-Sec)); the sequence is CU. Position 498 (U498) is a non-standard amino acid, selenocysteine.

It belongs to the class-I pyridine nucleotide-disulfide oxidoreductase family. Homodimer. It depends on FAD as a cofactor. Post-translationally, ISGylated.

The protein resides in the cytoplasm. The enzyme catalyses [thioredoxin]-dithiol + NADP(+) = [thioredoxin]-disulfide + NADPH + H(+). The catalysed reaction is H2O2 + NADPH + H(+) = NADP(+) + 2 H2O. In terms of biological role, reduces disulfideprotein thioredoxin (Trx) to its dithiol-containing form. Homodimeric flavoprotein involved in the regulation of cellular redox reactions, growth and differentiation. Contains a selenocysteine residue at the C-terminal active site that is essential for catalysis. Also has reductase activity on hydrogen peroxide (H2O2). In Sus scrofa (Pig), this protein is Thioredoxin reductase 1, cytoplasmic (TXNRD1).